We begin with the raw amino-acid sequence, 283 residues long: Gap junction beta-1 protein (283 aa).

Residues 1-22 lie on the Cytoplasmic side of the membrane; it reads MNWTGLYTLLSGVNRHSTAIGR. Residues 23–45 traverse the membrane as a helical segment; it reads VWLSVIFIFRIMVLVVAAESVWG. The Extracellular segment spans residues 46-75; sequence DEKSSFICNTLQPGCNSVCYDQFFPISHVR. The helical transmembrane segment at 76–95 threads the bilayer; that stretch reads LWSLQLILVSTPALLVAMHV. Residues 96-130 lie on the Cytoplasmic side of the membrane; it reads AHQQHIEKKMLRLEGHGDPLHLEEVKRHKVHISGT. Residues 131–153 form a helical membrane-spanning segment; that stretch reads LWWTYVISVVFRLLFEAVFMYVF. Over 154–191 the chain is Extracellular; it reads YLLYPGYAMVRLVKCDVYPCPNTVDCFVSRPTEKTVFT. The helical transmembrane segment at 192–214 threads the bilayer; that stretch reads VFMLAASGICIILNVAEVVYLII. Residues 215-283 lie on the Cytoplasmic side of the membrane; that stretch reads RACARRAQRR…AEKSDRCSAC (69 aa). S233, S258, S266, and S277 each carry phosphoserine.

It belongs to the connexin family. Beta-type (group I) subfamily. A connexon is composed of a hexamer of connexins. Interacts with CNST.

The protein localises to the cell membrane. The protein resides in the cell junction. It is found in the gap junction. One gap junction consists of a cluster of closely packed pairs of transmembrane channels, the connexons, through which materials of low MW diffuse from one cell to a neighboring cell. This is Gap junction beta-1 protein (GJB1) from Homo sapiens (Human).